Here is a 696-residue protein sequence, read N- to C-terminus: Translation factor waclaw, mitochondrial (696 aa).

A mitochondrion-targeting transit peptide spans 1–76; the sequence is MIVGYSVFFH…RNLSTTNQVK (76 aa). Positions 97–278 constitute a tr-type G domain; it reads ERIRNFSIIA…RVIETVPPPQ (182 aa). Residues 106-113, 171-175, and 225-228 contribute to the GTP site; these read AHVDHGKS, DTPGH, and NKID.

The protein belongs to the TRAFAC class translation factor GTPase superfamily. Classic translation factor GTPase family. LepA subfamily.

The protein resides in the mitochondrion inner membrane. It carries out the reaction GTP + H2O = GDP + phosphate + H(+). Functionally, promotes mitochondrial protein synthesis. May act as a fidelity factor of the translation reaction, by catalyzing a one-codon backward translocation of tRNAs on improperly translocated ribosomes. Binds to mitochondrial ribosomes in a GTP-dependent manner. In Drosophila melanogaster (Fruit fly), this protein is Translation factor waclaw, mitochondrial.